The sequence spans 378 residues: Mas-related G-protein coupled receptor MRG (378 aa).

Over 1 to 77 the chain is Extracellular; sequence MVWGKICWFS…VGQQALPLNI (77 aa). 2 N-linked (GlcNAc...) asparagine glycosylation sites follow: Asn54 and Asn57. Residues 78–101 form a helical membrane-spanning segment; sequence IAPKAVLVSLCGVLLNGTVFWLLC. Topologically, residues 102–109 are cytoplasmic; sequence CGATNPYM. A helical membrane pass occupies residues 110 to 136; that stretch reads VYILHLVAADVIYLCCSAVGFLQVTLL. Over 137 to 154 the chain is Extracellular; that stretch reads TYHGVVFFIPDFLAILSP. The chain crosses the membrane as a helical span at residues 155–169; the sequence is FSFEVCLCLLVAIST. The Cytoplasmic portion of the chain corresponds to 170-191; the sequence is ERCVCVLFPIWYRCHRPKYTSN. Residues 192-207 traverse the membrane as a helical segment; sequence VVCTLIWGLPFCINIV. Residues 208–221 lie on the Extracellular side of the membrane; sequence KSLFLTYWKHVKAC. The helical transmembrane segment at 222 to 248 threads the bilayer; sequence VIFLKLSGLFHAILSLVMCVSSLTLLI. Residues 249-264 are Cytoplasmic-facing; it reads RFLCCSQQQKATRVYA. Residues 265–286 form a helical membrane-spanning segment; the sequence is VVQISAPMFLLWALPLSVAPLI. Residues 287-297 are Extracellular-facing; it reads TDFKMFVTTSY. Residues 298-317 form a helical membrane-spanning segment; it reads LISLFLIINSSANPIIYFFV. Residues 318–378 lie on the Cytoplasmic side of the membrane; sequence GSLRKKRLKE…PREHRVDVET (61 aa). The interval 344-378 is disordered; that stretch reads GRNKKAAGIDPMEQPHSTQHVENLLPREHRVDVET. The segment covering 368-378 has biased composition (basic and acidic residues); sequence LPREHRVDVET.

This sequence belongs to the G-protein coupled receptor 1 family. Mas subfamily.

The protein localises to the cell membrane. This chain is Mas-related G-protein coupled receptor MRG (MAS1L), found in Homo sapiens (Human).